The following is a 288-amino-acid chain: ATP synthase gamma chain (288 aa).

Belongs to the ATPase gamma chain family. F-type ATPases have 2 components, CF(1) - the catalytic core - and CF(0) - the membrane proton channel. CF(1) has five subunits: alpha(3), beta(3), gamma(1), delta(1), epsilon(1). CF(0) has three main subunits: a, b and c.

It is found in the cell inner membrane. Functionally, produces ATP from ADP in the presence of a proton gradient across the membrane. The gamma chain is believed to be important in regulating ATPase activity and the flow of protons through the CF(0) complex. The protein is ATP synthase gamma chain of Polaromonas sp. (strain JS666 / ATCC BAA-500).